A 92-amino-acid chain; its full sequence is Small ribosomal subunit protein uS19c (92 aa).

Belongs to the universal ribosomal protein uS19 family.

The protein resides in the plastid. It localises to the chloroplast. In terms of biological role, protein S19 forms a complex with S13 that binds strongly to the 16S ribosomal RNA. The chain is Small ribosomal subunit protein uS19c from Manihot esculenta (Cassava).